The sequence spans 305 residues: Leucine-rich repeat-containing protein 25 (305 aa).

The N-terminal stretch at 1–20 is a signal peptide; sequence MGGTLAWTLLLPLLLRESDS. At 21 to 165 the chain is on the extracellular side; sequence LEPSCTVSSA…SCAPGLASAT (145 aa). LRR repeat units lie at residues 39–59, 62–83, and 86–107; these read SATC…QSLR, NVIL…FFAH, and KLEV…LAAR. 2 N-linked (GlcNAc...) asparagine glycosylation sites follow: Asn-44 and Asn-55. N-linked (GlcNAc...) asparagine glycosylation is found at Asn-130 and Asn-148. A helical transmembrane segment spans residues 166–186; it reads IGAVVVSGCLLLGLAIAGPVL. At 187-305 the chain is on the cytoplasmic side; it reads AWRLWRCRVA…DEEEYVIPGH (119 aa). The disordered stretch occupies residues 204-229; the sequence is PWAAQDGPKPGLGLQPRYGSRSAPKP. Tyr-284 carries the post-translational modification Phosphotyrosine.

As to quaternary structure, interacts with RIGI. Interacts with SQSTM1. Interacts with p65/RELA; this interaction promotes the degradation of RELA through autophagy. As to expression, expressed in plasmacytoid dendritic cells (PDC), monocyte-derived dendritic cells (MDDC), granulocytes, monocytes, B-lymphocytes, peripheral blood leukocytes, spleen, bone marrow, and, to a lesser extent, lymph nodes, fetal liver, and appendix but not in thymus.

Its subcellular location is the membrane. The protein localises to the cytoplasm. Its function is as follows. Plays a role in the inhibition of RLR-mediated type I interferon signaling pathway by targeting RIGI for autophagic degradation. Interacts specifically with ISG15-associated RIGI to promote interaction between RIGI and the autophagic cargo receptor p62/SQSTM1 to mediate RIGI degradation via selective autophagy. Also plays a role in the inhibition of NF-kappa-B signaling pathway and inflammatory response by promoting the degradation of p65/RELA. The sequence is that of Leucine-rich repeat-containing protein 25 (LRRC25) from Homo sapiens (Human).